The following is a 266-amino-acid chain: 15-hydroxyprostaglandin dehydrogenase [NAD(+)] (266 aa).

NAD(+)-binding positions include Gly12 to Ala20, Asp36 to Trp37, Cys63 to Val65, and Asn91. Substrate contacts are provided by Ser138 and Gln148. The active-site Proton acceptor is the Tyr151. Residues Tyr151–Lys155 and Val186–Thr188 contribute to the NAD(+) site.

The protein belongs to the short-chain dehydrogenases/reductases (SDR) family. Homodimer.

It is found in the cytoplasm. The enzyme catalyses prostaglandin E2 + NAD(+) = 15-oxoprostaglandin E2 + NADH + H(+). It catalyses the reaction (15S)-hydroxy-(5Z,8Z,11Z,13E)-eicosatetraenoate + NAD(+) = 15-oxo-(5Z,8Z,11Z,13E)-eicosatetraenoate + NADH + H(+). The catalysed reaction is (11R)-hydroxy-(5Z,8Z,12E,14Z)-eicosatetraenoate + NAD(+) = 11-oxo-(5Z,8Z,12E,14Z)-eicosatetraenoate + NADH + H(+). It carries out the reaction lipoxin A4 + NAD(+) = 15-oxo-(5S,6R)-dihydroxy-(7E,9E,11Z,13E)-eicosatetraenoate + NADH + H(+). The enzyme catalyses 15-oxo-(5S,6R)-dihydroxy-(7E,9E,11Z)-eicosatrienoate + NADH + H(+) = (5S,6R,15S)-trihydroxy-(7E,9E,11Z)-eicosatrienoate + NAD(+). It catalyses the reaction prostaglandin A1 + NAD(+) = 15-oxo-prostaglandin A1 + NADH + H(+). The catalysed reaction is prostaglandin E1 + NAD(+) = 15-oxoprostaglandin E1 + NADH + H(+). It carries out the reaction 14-hydroxy-(4Z,7Z,10Z,12E,16Z,19Z)-docosahexaenoate + NAD(+) = 14-oxo-(4Z,7Z,10Z,12E,16Z,19Z)-docosahexaenoate + NADH + H(+). The enzyme catalyses resolvin E1 + NAD(+) = 18-oxo-resolvin E1 + NADH + H(+). It catalyses the reaction resolvin D1 + NAD(+) = 8-oxoresolvin D1 + NADH + H(+). The catalysed reaction is resolvin D1 + NAD(+) = 17-oxoresolvin D1 + NADH + H(+). It carries out the reaction resolvin D2 + NAD(+) = 7-oxoresolvin D2 + NADH + H(+). The enzyme catalyses resolvin D2 + NAD(+) = 16-oxoresolvin D2 + NADH + H(+). Functionally, catalyzes the NAD-dependent dehydrogenation (oxidation) of a broad array of hydroxylated polyunsaturated fatty acids (mainly eicosanoids and docosanoids, including prostaglandins, lipoxins and resolvins), yielding their corresponding keto (oxo) metabolites. Decreases the levels of the pro-proliferative prostaglandins such as prostaglandin E2 (whose activity is increased in cancer because of an increase in the expression of cyclooxygenase 2) and generates oxo-fatty acid products that can profoundly influence cell function by abrogating pro-inflammatory cytokine expression. Converts resolvins E1, D1 and D2 to their oxo products, which represents a mode of resolvin inactivation. Resolvin E1 plays important roles during the resolution phase of acute inflammation, while resolvins D1 and D2 have a unique role in obesity-induced adipose inflammation. The chain is 15-hydroxyprostaglandin dehydrogenase [NAD(+)] (HPGD) from Macaca fascicularis (Crab-eating macaque).